The chain runs to 83 residues: Toxin TdNa3 (83 aa).

The signal sequence occupies residues 1–20 (MKGMIMLISCLMLIDVVVES). Residues 21 to 82 (KNGYIIEPKG…IFDYYNNKCG (62 aa)) enclose the LCN-type CS-alpha/beta domain. 4 disulfide bridges follow: cysteine 31-cysteine 81, cysteine 35-cysteine 57, cysteine 43-cysteine 62, and cysteine 47-cysteine 64. Cysteine 81 carries the post-translational modification Cysteine amide.

This sequence belongs to the long (4 C-C) scorpion toxin superfamily. Sodium channel inhibitor family. Beta subfamily. Expressed by the venom gland.

The protein localises to the secreted. Inhibits the sodium currents (Nav) in an apparent irreversible manner. Produces small depolarization and induces repetitive firing in squid axons. Is specific for arthropods (crickets, triatomides, crabs and squids), but is non-toxic to mice. The polypeptide is Toxin TdNa3 (Tityus discrepans (Venezuelan scorpion)).